The sequence spans 271 residues: Formamidopyrimidine-DNA glycosylase (271 aa).

The active-site Schiff-base intermediate with DNA is proline 2. Glutamate 3 functions as the Proton donor in the catalytic mechanism. The Proton donor; for beta-elimination activity role is filled by lysine 58. Positions 91, 110, and 152 each coordinate DNA. The segment at 237–271 (RVYDRAGQPCRVCGEPIRCVRLGQRATYYCPRCQR) adopts an FPG-type zinc-finger fold. The Proton donor; for delta-elimination activity role is filled by arginine 261.

It belongs to the FPG family. Monomer. Zn(2+) is required as a cofactor.

It carries out the reaction Hydrolysis of DNA containing ring-opened 7-methylguanine residues, releasing 2,6-diamino-4-hydroxy-5-(N-methyl)formamidopyrimidine.. The catalysed reaction is 2'-deoxyribonucleotide-(2'-deoxyribose 5'-phosphate)-2'-deoxyribonucleotide-DNA = a 3'-end 2'-deoxyribonucleotide-(2,3-dehydro-2,3-deoxyribose 5'-phosphate)-DNA + a 5'-end 5'-phospho-2'-deoxyribonucleoside-DNA + H(+). In terms of biological role, involved in base excision repair of DNA damaged by oxidation or by mutagenic agents. Acts as a DNA glycosylase that recognizes and removes damaged bases. Has a preference for oxidized purines, such as 7,8-dihydro-8-oxoguanine (8-oxoG). Has AP (apurinic/apyrimidinic) lyase activity and introduces nicks in the DNA strand. Cleaves the DNA backbone by beta-delta elimination to generate a single-strand break at the site of the removed base with both 3'- and 5'-phosphates. The sequence is that of Formamidopyrimidine-DNA glycosylase from Methylococcus capsulatus (strain ATCC 33009 / NCIMB 11132 / Bath).